Reading from the N-terminus, the 273-residue chain is Pantothenate synthetase (273 aa).

27 to 34 is a binding site for ATP; sequence MGALHAGH. Histidine 34 (proton donor) is an active-site residue. Glutamine 58 serves as a coordination point for (R)-pantoate. Glutamine 58 provides a ligand contact to beta-alanine. Position 144–147 (144–147) interacts with ATP; the sequence is GKKD. Residue glutamine 150 coordinates (R)-pantoate. Residues valine 173 and 181-184 contribute to the ATP site; that span reads LSSR.

Belongs to the pantothenate synthetase family. As to quaternary structure, homodimer.

The protein localises to the cytoplasm. It catalyses the reaction (R)-pantoate + beta-alanine + ATP = (R)-pantothenate + AMP + diphosphate + H(+). It participates in cofactor biosynthesis; (R)-pantothenate biosynthesis; (R)-pantothenate from (R)-pantoate and beta-alanine: step 1/1. Its function is as follows. Catalyzes the condensation of pantoate with beta-alanine in an ATP-dependent reaction via a pantoyl-adenylate intermediate. The protein is Pantothenate synthetase of Campylobacter hominis (strain ATCC BAA-381 / DSM 21671 / CCUG 45161 / LMG 19568 / NCTC 13146 / CH001A).